The chain runs to 35 residues: Mu/omega-theraphotoxin-Tap1a (35 aa).

Intrachain disulfides connect Cys-3–Cys-18, Cys-10–Cys-23, and Cys-17–Cys-30.

It belongs to the neurotoxin 10 (Hwtx-1) family. 59 (Tltx) subfamily. Expressed by the venom gland.

The protein resides in the secreted. Functionally, gating-modifier toxin that inhibits both sodium (Nav) and calcium (Cav3) channels by inducing hyperpolarizing shift in voltage-dependence of activation and steady state inactivation. Inhibits Nav1.1/SCN1A, Nav1.2/SCN2A, Nav1.3/SCN3A, Nav1.6/SCN6A, Nav1.7/SCN9A and Cav3.1/CACNA1G sodium and calcium channels at nanomolar concentrations (IC(50)=81-301 nM). Surprisingly, selectively slows fast inactivation of Nav1.3/SCN3A. Also shows moderate inhibition of Cav3.2/CACNA1H calcium channels (IC(50)=1233 nM). Ex vivo, nearly ablates neuronal mechanosensitivity in afferent fibers innervating the colon and the bladder. In vivo, in a mouse model of irritable bowel syndrome, intracolonic administration of the toxin reverses colonic mechanical hypersensitivity. The protein is Mu/omega-theraphotoxin-Tap1a of Theraphosa apophysis (Goliath pinkfoot tarantula).